Here is an 84-residue protein sequence, read N- to C-terminus: Glutaredoxin (84 aa).

The 84-residue stretch at 1 to 84 (MPPVVIYTTA…AGKLDALLSA (84 aa)) folds into the Glutaredoxin domain. Cys-12 and Cys-15 are oxidised to a cystine.

This sequence belongs to the glutaredoxin family. As to quaternary structure, monomer.

The protein resides in the cytoplasm. In terms of biological role, has a glutathione-disulfide oxidoreductase activity in the presence of NADPH and glutathione reductase. Reduces low molecular weight disulfides and proteins. The chain is Glutaredoxin (grx) from Pseudomonas aeruginosa (strain ATCC 15692 / DSM 22644 / CIP 104116 / JCM 14847 / LMG 12228 / 1C / PRS 101 / PAO1).